Here is a 247-residue protein sequence, read N- to C-terminus: MAVRAQFENSNEVGVFATLTNSYAIVAIGGSENFYSVFEAELQDVIPICHASIGGTRIVGRLTAGNRKGLLVPTSTTDQELQHLRNSIPDSVKIQRVEERLSALGNVICCNDHVALIHPDLERETEEIIADVLGVEVFRQTVADNVLTGSYMALSNQGGIVHPKTSIRDQDELSSLLQVPLVAGSVNRGSPVVGAGMVVNDWLAVTGLDTTATELSVMESVFRLGEMGAKGLGMGNANKESIVESFY.

Phosphoserine; by CK1 occurs at positions 174 and 175.

Belongs to the eIF-6 family. As to quaternary structure, monomer. Associates with the 60S ribosomal subunit. Post-translationally, phosphorylation at Ser-174 and Ser-175 promotes nuclear export.

It is found in the cytoplasm. Its subcellular location is the nucleus. It localises to the nucleolus. Binds to the 60S ribosomal subunit and prevents its association with the 40S ribosomal subunit to form the 80S initiation complex in the cytoplasm. Is also involved in ribosome biogenesis. Associates with pre-60S subunits in the nucleus and is involved in its nuclear export. This chain is Eukaryotic translation initiation factor 6 (tif6), found in Talaromyces stipitatus (strain ATCC 10500 / CBS 375.48 / QM 6759 / NRRL 1006) (Penicillium stipitatum).